A 354-amino-acid chain; its full sequence is Histidinol-phosphate aminotransferase (354 aa).

At lysine 210 the chain carries N6-(pyridoxal phosphate)lysine.

This sequence belongs to the class-II pyridoxal-phosphate-dependent aminotransferase family. Histidinol-phosphate aminotransferase subfamily. In terms of assembly, homodimer. The cofactor is pyridoxal 5'-phosphate.

It carries out the reaction L-histidinol phosphate + 2-oxoglutarate = 3-(imidazol-4-yl)-2-oxopropyl phosphate + L-glutamate. Its pathway is amino-acid biosynthesis; L-histidine biosynthesis; L-histidine from 5-phospho-alpha-D-ribose 1-diphosphate: step 7/9. The protein is Histidinol-phosphate aminotransferase of Clostridium botulinum (strain 657 / Type Ba4).